A 192-amino-acid chain; its full sequence is Probable nicotinate-nucleotide adenylyltransferase (192 aa).

The protein belongs to the NadD family.

The enzyme catalyses nicotinate beta-D-ribonucleotide + ATP + H(+) = deamido-NAD(+) + diphosphate. It participates in cofactor biosynthesis; NAD(+) biosynthesis; deamido-NAD(+) from nicotinate D-ribonucleotide: step 1/1. Its function is as follows. Catalyzes the reversible adenylation of nicotinate mononucleotide (NaMN) to nicotinic acid adenine dinucleotide (NaAD). This Bradyrhizobium sp. (strain BTAi1 / ATCC BAA-1182) protein is Probable nicotinate-nucleotide adenylyltransferase.